We begin with the raw amino-acid sequence, 418 residues long: Replication factor C large subunit (418 aa).

47 to 54 (GSQGTGKT) is an ATP binding site.

The protein belongs to the activator 1 small subunits family. RfcL subfamily. In terms of assembly, heteromultimer composed of small subunits (RfcS) and large subunits (RfcL).

Functionally, part of the RFC clamp loader complex which loads the PCNA sliding clamp onto DNA. The polypeptide is Replication factor C large subunit (Thermoplasma acidophilum (strain ATCC 25905 / DSM 1728 / JCM 9062 / NBRC 15155 / AMRC-C165)).